A 769-amino-acid chain; its full sequence is Serine protease HtrA-like (769 aa).

The segment covering 1 to 20 (MDIGKKHVIPKSQYRRKRRE) has biased composition (basic residues). Disordered regions lie at residues 1–287 (MDIG…DKDN) and 324–390 (EDKH…KGRA). 2 stretches are compositionally biased toward basic and acidic residues: residues 21-64 (FFHN…ERFK) and 71-108 (LEQR…DVSK). Polar residues predominate over residues 126–137 (YEQNSEATLSTK). Residues 138–186 (STDKVESTEMRKLSSDKNKVGHEEQHVLSKPSEHDKETRIDSESSRTDS) show a composition bias toward basic and acidic residues. A compositionally biased stretch (polar residues) spans 247–262 (QQSQNEQTKTYTYGDS). Residues 264–287 (QNDKSNHENDLSHHTPSISDDKDN) are compositionally biased toward basic and acidic residues. Over residues 331-347 (ADSSETVGYQSQSTASH) the composition is skewed to polar residues. Residues 348 to 364 (RSTEKRNISINDHDKLN) are compositionally biased toward basic and acidic residues. Over residues 365–390 (GQKTNTKTSANNNQKKATSKLNKGRA) the composition is skewed to polar residues. A helical membrane pass occupies residues 410–430 (LVILMGIIILIVILNAIFNNV). Residues histidine 504, aspartate 534, and serine 619 each act as charge relay system in the active site. Residues 680-733 (IASLNSFERQAVKLPGKVKNGVVVDQVDNNGLADQSGLKKGDVITELDGKLLED) enclose the PDZ domain.

The protein belongs to the peptidase S1C family.

Its subcellular location is the cell membrane. The protein is Serine protease HtrA-like of Staphylococcus aureus (strain N315).